The sequence spans 389 residues: MKIAVINSGSSSIKFKLYLMPQSIVLAHVHVEKIGETSSKITFRHTDKKEVFSNKIDTHHEGLRVINDILKEYQIIEHFSSLDAIAHRVVHGGDFFKSATLINEDVIYKIRELIPLSPLHNRANLEGILVSLKKAPSVPQIAVFDTSFHASLPKEAYLYALPYELYKEHKIRRFGFHGISHAYVLKKVAQEMQKNLHGLNMITLHLGNGSSACAIRNGKSVDTSMGFTPLEGLVMGSRSGDIDPQIVIYLQKELGYGLDEVEELLNRHSGLIGVCGEIDLREIIKRDDELSHVALDMMTRRVKKYIGAYMALLGRVDAIAFCAGIGENSSEVREKILKNLELFGIELDTKANEKNLTKISKQTSKIEVFVINTDEELEIALEAEALLRA.

Asn7 serves as a coordination point for Mg(2+). An ATP-binding site is contributed by Lys14. Residue Arg88 coordinates substrate. Asp145 acts as the Proton donor/acceptor in catalysis. ATP contacts are provided by residues 205–209, 279–281, and 324–328; these read HLGNG, DLR, and GIGEN. Glu375 is a binding site for Mg(2+).

Belongs to the acetokinase family. Homodimer. Mg(2+) is required as a cofactor. The cofactor is Mn(2+).

Its subcellular location is the cytoplasm. The enzyme catalyses acetate + ATP = acetyl phosphate + ADP. It participates in metabolic intermediate biosynthesis; acetyl-CoA biosynthesis; acetyl-CoA from acetate: step 1/2. Catalyzes the formation of acetyl phosphate from acetate and ATP. Can also catalyze the reverse reaction. This Sulfurimonas denitrificans (strain ATCC 33889 / DSM 1251) (Thiomicrospira denitrificans (strain ATCC 33889 / DSM 1251)) protein is Acetate kinase.